We begin with the raw amino-acid sequence, 372 residues long: MNLEEENTIFKPLYSLKHSPINAYFSKNSDDFVVRERPLYEFSGKGEHLILHINKKDLTTNEALKILSETSGVKIRDFGYAGLKDKQGSTFQYLSMPKKFESFLSNFSHPKLKILEIFTHENKLRIGHLKGNTFFIRLKKVLPSDALKLEQALMNLDKQGFTNYFGYQRFGKFGDNYKEGLEILHGKKMKNVKMKEFLISAFQSELFNRYLSKRVELSHFANDFSEKELIQIYKISKEEAKELKKQEQFFKLLKGEVLGHYPFGKCFLCEDLSAELGRFKARDISAMGLLIGAKAYETGEGLALNLENEIFKDTLEFKAKMQGSRRFMWGYLEELKWRYDEEKAHFCIEFFLQKGSYATVVLEEILHKNLFE.

Asp85 functions as the Nucleophile in the catalytic mechanism. Residues 160–330 (GFTNYFGYQR…MQGSRRFMWG (171 aa)) enclose the TRUD domain.

The protein belongs to the pseudouridine synthase TruD family.

It catalyses the reaction uridine(13) in tRNA = pseudouridine(13) in tRNA. Its function is as follows. Responsible for synthesis of pseudouridine from uracil-13 in transfer RNAs. The protein is tRNA pseudouridine synthase D of Campylobacter jejuni subsp. jejuni serotype O:23/36 (strain 81-176).